A 944-amino-acid chain; its full sequence is Isoleucine--tRNA ligase (944 aa).

Residues 58-68 (PYANGDIHIGH) carry the 'HIGH' region motif. Glutamate 568 provides a ligand contact to L-isoleucyl-5'-AMP. Positions 609 to 613 (KMSKS) match the 'KMSKS' region motif. Lysine 612 contacts ATP. The Zn(2+) site is built by cysteine 907, cysteine 910, cysteine 927, and cysteine 930.

It belongs to the class-I aminoacyl-tRNA synthetase family. IleS type 1 subfamily. In terms of assembly, monomer. Requires Zn(2+) as cofactor.

It localises to the cytoplasm. It catalyses the reaction tRNA(Ile) + L-isoleucine + ATP = L-isoleucyl-tRNA(Ile) + AMP + diphosphate. In terms of biological role, catalyzes the attachment of isoleucine to tRNA(Ile). As IleRS can inadvertently accommodate and process structurally similar amino acids such as valine, to avoid such errors it has two additional distinct tRNA(Ile)-dependent editing activities. One activity is designated as 'pretransfer' editing and involves the hydrolysis of activated Val-AMP. The other activity is designated 'posttransfer' editing and involves deacylation of mischarged Val-tRNA(Ile). This is Isoleucine--tRNA ligase from Psychromonas ingrahamii (strain DSM 17664 / CCUG 51855 / 37).